A 354-amino-acid chain; its full sequence is Dihydroorotate dehydrogenase (quinone) (354 aa).

Residues Ala61–Lys65 and Ala85 contribute to the FMN site. Lys65 serves as a coordination point for substrate. Asn110–Phe114 contacts substrate. FMN contacts are provided by Asn139 and Asn170. Position 170 (Asn170) interacts with substrate. Ser173 serves as the catalytic Nucleophile. Asn175 is a binding site for substrate. FMN-binding residues include Lys211 and Thr239. Asn240 to Thr241 is a substrate binding site. FMN is bound by residues Gly261, Gly290, and Tyr311 to Thr312.

The protein belongs to the dihydroorotate dehydrogenase family. Type 2 subfamily. In terms of assembly, monomer. Requires FMN as cofactor.

It localises to the cell membrane. It catalyses the reaction (S)-dihydroorotate + a quinone = orotate + a quinol. It participates in pyrimidine metabolism; UMP biosynthesis via de novo pathway; orotate from (S)-dihydroorotate (quinone route): step 1/1. Catalyzes the conversion of dihydroorotate to orotate with quinone as electron acceptor. This chain is Dihydroorotate dehydrogenase (quinone), found in Cereibacter sphaeroides (strain ATCC 17023 / DSM 158 / JCM 6121 / CCUG 31486 / LMG 2827 / NBRC 12203 / NCIMB 8253 / ATH 2.4.1.) (Rhodobacter sphaeroides).